We begin with the raw amino-acid sequence, 77 residues long: Cell division topological specificity factor (77 aa).

Belongs to the MinE family.

Functionally, prevents the cell division inhibition by proteins MinC and MinD at internal division sites while permitting inhibition at polar sites. This ensures cell division at the proper site by restricting the formation of a division septum at the midpoint of the long axis of the cell. The polypeptide is Cell division topological specificity factor (Helicobacter pylori (strain HPAG1)).